A 470-amino-acid chain; its full sequence is tRNA(Ile)-lysidine synthase (470 aa).

Residue 32 to 37 participates in ATP binding; the sequence is SGGVDS.

It belongs to the tRNA(Ile)-lysidine synthase family.

The protein resides in the cytoplasm. The enzyme catalyses cytidine(34) in tRNA(Ile2) + L-lysine + ATP = lysidine(34) in tRNA(Ile2) + AMP + diphosphate + H(+). In terms of biological role, ligates lysine onto the cytidine present at position 34 of the AUA codon-specific tRNA(Ile) that contains the anticodon CAU, in an ATP-dependent manner. Cytidine is converted to lysidine, thus changing the amino acid specificity of the tRNA from methionine to isoleucine. This Shewanella woodyi (strain ATCC 51908 / MS32) protein is tRNA(Ile)-lysidine synthase.